The sequence spans 1348 residues: Phosphoribosylformylglycinamidine synthase (1348 aa).

ATP is bound by residues 300–311 (GAATGAGGEIRD) and Ala-701. Residues Asp-702, Glu-741, Asn-745, and Asp-941 each coordinate Mg(2+). Position 943 (Ser-943) interacts with ATP. The region spanning 1099-1348 (VAILREQGVN…MFRNARVWCG (250 aa)) is the Glutamine amidotransferase type-1 domain. Cys-1192 (nucleophile) is an active-site residue. Active-site residues include His-1313 and Glu-1315.

This sequence in the N-terminal section; belongs to the FGAMS family. As to quaternary structure, monomer.

The protein localises to the cytoplasm. It catalyses the reaction N(2)-formyl-N(1)-(5-phospho-beta-D-ribosyl)glycinamide + L-glutamine + ATP + H2O = 2-formamido-N(1)-(5-O-phospho-beta-D-ribosyl)acetamidine + L-glutamate + ADP + phosphate + H(+). It participates in purine metabolism; IMP biosynthesis via de novo pathway; 5-amino-1-(5-phospho-D-ribosyl)imidazole from N(2)-formyl-N(1)-(5-phospho-D-ribosyl)glycinamide: step 1/2. In terms of biological role, phosphoribosylformylglycinamidine synthase involved in the purines biosynthetic pathway. Catalyzes the ATP-dependent conversion of formylglycinamide ribonucleotide (FGAR) and glutamine to yield formylglycinamidine ribonucleotide (FGAM) and glutamate. The sequence is that of Phosphoribosylformylglycinamidine synthase from Xanthomonas axonopodis pv. citri (strain 306).